Reading from the N-terminus, the 283-residue chain is Pantothenate synthetase (283 aa).

Residue 30–37 coordinates ATP; sequence MGNLHNGH. His-37 (proton donor) is an active-site residue. Position 61 (Gln-61) interacts with (R)-pantoate. Gln-61 lines the beta-alanine pocket. 149-152 contacts ATP; it reads GEKD. Gln-155 is a (R)-pantoate binding site. Residue 186 to 189 coordinates ATP; the sequence is LSSR.

It belongs to the pantothenate synthetase family. In terms of assembly, homodimer.

It localises to the cytoplasm. The catalysed reaction is (R)-pantoate + beta-alanine + ATP = (R)-pantothenate + AMP + diphosphate + H(+). It functions in the pathway cofactor biosynthesis; (R)-pantothenate biosynthesis; (R)-pantothenate from (R)-pantoate and beta-alanine: step 1/1. Functionally, catalyzes the condensation of pantoate with beta-alanine in an ATP-dependent reaction via a pantoyl-adenylate intermediate. This chain is Pantothenate synthetase, found in Shigella flexneri serotype 5b (strain 8401).